The primary structure comprises 540 residues: Membrane protein insertase YidC (540 aa).

A run of 5 helical transmembrane segments spans residues 1-21 (MVVQ…MMLD), 351-371 (NWGI…FPLT), 418-438 (LGGC…YYML), 464-484 (ILPI…PSSI), and 497-517 (PLIF…YYII).

The protein belongs to the OXA1/ALB3/YidC family. Type 1 subfamily. In terms of assembly, interacts with the Sec translocase complex via SecD. Specifically interacts with transmembrane segments of nascent integral membrane proteins during membrane integration.

It localises to the cell membrane. In terms of biological role, required for the insertion and/or proper folding and/or complex formation of integral membrane proteins into the membrane. Involved in integration of membrane proteins that insert both dependently and independently of the Sec translocase complex, as well as at least some lipoproteins. Aids folding of multispanning membrane proteins. In Wigglesworthia glossinidia brevipalpis, this protein is Membrane protein insertase YidC.